A 558-amino-acid chain; its full sequence is MPAKLNSPSRYHGIYNAPHRAFLRSVGLTDEEIGKPLVAIATAWSEAGPCNFHTLALARVAKEGTKEAGLSPLAFPTMVVNDNIGMGSEGMRYSLVSRDLIADMVEAQFNAHAFDGLVGIGGCDKTTPGILMAMARLNVPSIYIYGGSAEPGYFMGKRLTIEDVHEAIGAYLAKRITENELYEIEKRAHPTLGTCSGLFTANTMGSMSEALGMALPGSASPTATSSRRVMYVKETGKALGSLIENGIKSREILTFEAFENAITTLMAMGGSTNAVLHLLAIAYEAGVKLTLDDFNRISKRTPYIASMKPGGDYVMADLDEVGGVPVVLKKLLDAGLLHGDVLTVTGKTMKQNLEQYKYPNVPHSHIVRDVKNPIKPRGGIVILKGSLAPEGAVIKVAATNVVKFEGKAKVYNSEDDAFKGVQSGEVSEGEVVIIRYEGPKGAPGMPEMLRVTAAIMGAGLNNVALVTDGRFSGATRGPMVGHVAPEAMVGGPIAIVEDGDTIVIDVESERLDLKLSEEEIKNRLKRWSPPSPRYKSGLLAKYASLVSQASMGAVTRPA.

A [2Fe-2S] cluster-binding site is contributed by Cys50. A Mg(2+)-binding site is contributed by Asp82. Cys123 contributes to the [2Fe-2S] cluster binding site. 2 residues coordinate Mg(2+): Asp124 and Lys125. Lys125 is modified (N6-carboxylysine). Cys195 contacts [2Fe-2S] cluster. Glu447 contacts Mg(2+). The active-site Proton acceptor is the Ser472.

Belongs to the IlvD/Edd family. Homodimer. [2Fe-2S] cluster serves as cofactor. Requires Mg(2+) as cofactor.

The enzyme catalyses (2R)-2,3-dihydroxy-3-methylbutanoate = 3-methyl-2-oxobutanoate + H2O. It carries out the reaction (2R,3R)-2,3-dihydroxy-3-methylpentanoate = (S)-3-methyl-2-oxopentanoate + H2O. Its pathway is amino-acid biosynthesis; L-isoleucine biosynthesis; L-isoleucine from 2-oxobutanoate: step 3/4. It participates in amino-acid biosynthesis; L-valine biosynthesis; L-valine from pyruvate: step 3/4. Functionally, functions in the biosynthesis of branched-chain amino acids. Catalyzes the dehydration of (2R,3R)-2,3-dihydroxy-3-methylpentanoate (2,3-dihydroxy-3-methylvalerate) into 2-oxo-3-methylpentanoate (2-oxo-3-methylvalerate) and of (2R)-2,3-dihydroxy-3-methylbutanoate (2,3-dihydroxyisovalerate) into 2-oxo-3-methylbutanoate (2-oxoisovalerate), the penultimate precursor to L-isoleucine and L-valine, respectively. The polypeptide is Dihydroxy-acid dehydratase (Saccharolobus islandicus (strain Y.N.15.51 / Yellowstone #2) (Sulfolobus islandicus)).